The following is a 348-amino-acid chain: MO25-like protein At2g03410 (348 aa).

Belongs to the Mo25 family.

In Arabidopsis thaliana (Mouse-ear cress), this protein is MO25-like protein At2g03410.